We begin with the raw amino-acid sequence, 69 residues long: uncharacterized protein (69 aa).

Residues 23-46 (AENEGNRKENRRQMQSRNERGCNV) are disordered. Positions 26 to 44 (EGNRKENRRQMQSRNERGC) are enriched in basic and acidic residues.

This is an uncharacterized protein from Homo sapiens (Human).